The chain runs to 503 residues: MGFDPENQSISSVGQVVGDSSSGGITAEKEPLLKENHSPENYSVLAAIPPFLFPALGALLFGYEIGATSCAIMSLKSPTLSGISWYDLSSVDVGIITSGSLYGALIGSIVAFSVADIIGRRKELILAAFLYLVGAIVTVVAPVFSILIIGRVTYGMGIGLTMHAAPMYIAETAPSQIRGRMISLKEFSTVLGMVGGYGIGSLWITVISGWRYMYATILPFPVIMGTGMCWLPASPRWLLLRALQGQGNGENLQQAAIRSLCRLRGSVIADSAAEQVNEILAELSLVGEDKEATFGELFRGKCLKALTIAGGLVLFQQITGQPSVLYYAPSILQTAGFSAAADATRISILLGLLKLVMTGVSVIVIDRVGRRPLLLCGVSGMVISLFLLGSYYMFYKNVPAVAVAALLLYVGCYQLSFGPIGWLMISEIFPLKLRGRGISLAVLVNFGANALVTFAFSPLKELLGAGILFCAFGVICVVSLFFIYYIVPETKGLTLEEIEAKCL.

The segment at 1-23 is disordered; it reads MGFDPENQSISSVGQVVGDSSSG. Over residues 8-23 the composition is skewed to low complexity; that stretch reads QSISSVGQVVGDSSSG. A run of 12 helical transmembrane segments spans residues 51-73, 95-115, 129-149, 152-172, 190-210, 213-233, 305-325, 346-366, 374-394, 405-425, 437-457, and 467-487; these read FLFP…CAIM, IITS…FSVA, FLYL…ILII, VTYG…IAET, VLGM…ISGW, MYAT…WLPA, ALTI…PSVL, ISIL…IVID, LLCG…YYMF, ALLL…WLMI, GISL…FAFS, and ILFC…YYIV.

Belongs to the major facilitator superfamily. Sugar transporter (TC 2.A.1.1) family.

It localises to the membrane. In Arabidopsis thaliana (Mouse-ear cress), this protein is D-xylose-proton symporter-like 1.